Here is a 285-residue protein sequence, read N- to C-terminus: uncharacterized protein (285 aa).

This is an uncharacterized protein from Borreliella burgdorferi (strain ATCC 35210 / DSM 4680 / CIP 102532 / B31) (Borrelia burgdorferi).